Reading from the N-terminus, the 442-residue chain is tRNA-2-methylthio-N(6)-dimethylallyladenosine synthase (442 aa).

Positions 5-122 constitute an MTTase N-terminal domain; that stretch reads KRIFIKTFGC…LPDMIESKRR (118 aa). [4Fe-4S] cluster-binding residues include cysteine 14, cysteine 51, cysteine 85, cysteine 159, cysteine 163, and cysteine 166. Residues 145 to 377 enclose the Radical SAM core domain; it reads RVEGAAAFLS…QALNEAQGKA (233 aa). The region spanning 380-442 is the TRAM domain; it reads ASMVGSIQRV…LSHTLRGELV (63 aa).

The protein belongs to the methylthiotransferase family. MiaB subfamily. In terms of assembly, monomer. [4Fe-4S] cluster is required as a cofactor.

It is found in the cytoplasm. It catalyses the reaction N(6)-dimethylallyladenosine(37) in tRNA + (sulfur carrier)-SH + AH2 + 2 S-adenosyl-L-methionine = 2-methylsulfanyl-N(6)-dimethylallyladenosine(37) in tRNA + (sulfur carrier)-H + 5'-deoxyadenosine + L-methionine + A + S-adenosyl-L-homocysteine + 2 H(+). Functionally, catalyzes the methylthiolation of N6-(dimethylallyl)adenosine (i(6)A), leading to the formation of 2-methylthio-N6-(dimethylallyl)adenosine (ms(2)i(6)A) at position 37 in tRNAs that read codons beginning with uridine. The chain is tRNA-2-methylthio-N(6)-dimethylallyladenosine synthase from Methylobacillus flagellatus (strain ATCC 51484 / DSM 6875 / VKM B-1610 / KT).